The following is a 222-amino-acid chain: N-(5'-phosphoribosyl)anthranilate isomerase (222 aa).

The protein belongs to the TrpF family.

The catalysed reaction is N-(5-phospho-beta-D-ribosyl)anthranilate = 1-(2-carboxyphenylamino)-1-deoxy-D-ribulose 5-phosphate. Its pathway is amino-acid biosynthesis; L-tryptophan biosynthesis; L-tryptophan from chorismate: step 3/5. The polypeptide is N-(5'-phosphoribosyl)anthranilate isomerase (Rhizobium leguminosarum bv. trifolii (strain WSM2304)).